Consider the following 618-residue polypeptide: DnaJ homolog subfamily C member 2 (618 aa).

The J domain maps to 85-158 (DHYAVLGLAH…VKRRAFDSVD (74 aa)). 3 disordered regions span residues 281-315 (KEEE…QQEE), 330-349 (QAAQ…IKKE), and 419-448 (LQKE…QNNR). The span at 428 to 448 (QAQQAARGSEHSSAAGGQNNR) shows a compositional bias: polar residues. SANT domains lie at 445-507 (QNNR…KLDP) and 548-603 (SNAA…EMIK).

Component of ribosome-associated complex (RAC).

Its subcellular location is the nucleus. It is found in the cytoplasm. The protein resides in the cytosol. Acts both as a chaperone in the cytosol and as a chromatin regulator in the nucleus. When cytosolic, acts as a molecular chaperone: component of the ribosome-associated complex (RAC), a complex involved in folding or maintaining nascent polypeptides in a folding-competent state. When nuclear, mediates the switching from polycomb-repressed genes to an active state: specifically recruited at histone H2A ubiquitinated at 'Lys-119' (H2AK119ub), and promotes the displacement of the polycomb PRC1 complex from chromatin, thereby facilitating transcription activation. The chain is DnaJ homolog subfamily C member 2 (dnajc2) from Danio rerio (Zebrafish).